Here is a 265-residue protein sequence, read N- to C-terminus: Type III pantothenate kinase (265 aa).

6-13 (DVGNTHTV) contacts ATP. 112–115 (GADR) contributes to the substrate binding site. Aspartate 114 acts as the Proton acceptor in catalysis. Aspartate 134 contacts K(+). Threonine 137 contacts ATP. Threonine 189 lines the substrate pocket.

Belongs to the type III pantothenate kinase family. As to quaternary structure, homodimer. Requires NH4(+) as cofactor. K(+) serves as cofactor.

The protein localises to the cytoplasm. It carries out the reaction (R)-pantothenate + ATP = (R)-4'-phosphopantothenate + ADP + H(+). It functions in the pathway cofactor biosynthesis; coenzyme A biosynthesis; CoA from (R)-pantothenate: step 1/5. In terms of biological role, catalyzes the phosphorylation of pantothenate (Pan), the first step in CoA biosynthesis. This Streptomyces coelicolor (strain ATCC BAA-471 / A3(2) / M145) protein is Type III pantothenate kinase.